The chain runs to 365 residues: 7-methylxanthine methyltransferase PCS1 (365 aa).

Tyrosine 19 provides a ligand contact to S-adenosyl-L-homocysteine. Threonine 26 provides a ligand contact to caffeine. S-adenosyl-L-homocysteine is bound by residues cysteine 62, asparagine 67, aspartate 99, leucine 100, serine 134, and phenylalanine 135. Caffeine is bound by residues tyrosine 152, histidine 155, and tryptophan 156. Asparagine 173 serves as a coordination point for Mg(2+). Histidine 221 provides a ligand contact to caffeine. Residues aspartate 259, phenylalanine 261, and asparagine 262 each coordinate Mg(2+). Phenylalanine 317 contacts caffeine.

It belongs to the methyltransferase superfamily. Type-7 methyltransferase family. Requires Mg(2+) as cofactor.

It carries out the reaction 1,7-dimethylxanthine + S-adenosyl-L-methionine = caffeine + S-adenosyl-L-homocysteine + H(+). It catalyses the reaction 7-methylxanthine + S-adenosyl-L-methionine = theobromine + S-adenosyl-L-homocysteine + H(+). The protein operates within alkaloid biosynthesis. In terms of biological role, involved in the biosynthesis of caffeine. Catalyzes the conversion of 7-methylxanthine (7mX) to theobromine, and, to some extent, the conversion of paraxanthine to caffeine, but seems not able to convert theobromine to caffeine. In Camellia ptilophylla (Cocoa tea), this protein is 7-methylxanthine methyltransferase PCS1.